The following is a 157-amino-acid chain: Glutathione peroxidase (157 aa).

Cys35 is a catalytic residue.

Belongs to the glutathione peroxidase family.

The catalysed reaction is 2 glutathione + H2O2 = glutathione disulfide + 2 H2O. The polypeptide is Glutathione peroxidase (gpo) (Lactococcus lactis subsp. cremoris (strain MG1363)).